Consider the following 182-residue polypeptide: Protein Syd (182 aa).

It belongs to the Syd family.

Its subcellular location is the cell inner membrane. In terms of biological role, interacts with the SecY protein in vivo. May bind preferentially to an uncomplexed state of SecY, thus functioning either as a chelating agent for excess SecY in the cell or as a regulatory factor that negatively controls the translocase function. In Aeromonas salmonicida (strain A449), this protein is Protein Syd.